Consider the following 1523-residue polypeptide: MEAESGSSTSQDSLASLTAGDVLVRSTGVRGVKGAAGAGGRNSAAVSVTKLREALPSRQAAGVALSRGETPCEPPVPSSGASNGRVTGVTACSAAPGVWNAKGHPEHLLLVADPVEATSVPQMVYPKEAAVNPKEADRSLQPEYSRRPKDDVLISRYPTGQKEALRAVLKQKTRSAPVFKEVKVQLLGNASPERKESVGQDPILTHREADSATTIAAATAAAIATTAPLLKVQNDLQAKVNCVSTLLHKLQETDKQLQRVAEQQTNTKTQHEKPHCHERVSELEKQMNAFMLQRIHHLEKLQEHQMNIQSHFISSAVNMGGLQQTHMPSSGLLTKQSEKAEEQLLNNGISSSQKNFFPSSGLPTQGDGRHLEHILNPQAAPWGQMESSEKTMLTNDKMSWHSEIERPTALQTDSCPAYENSSQNCNSIEKTVKKADDLLQVLGQLRKEMHDMLQEASSWKSDMNDLIKSKPATIASDPPEYNHLVKPSVLQNVKAPNSILSDAKRVLREVQSRKKVLEENLEAVLRAKGGGAMSAFINALTTNRDALEKIRIRKAVDERIKAISAEIQAEMARNDMEQVKYDQKVPWIKRAQNIKAMKNSKEIKAKTQKIQGCSTKKPLSAAKSLRNHVEDNISKEGFRTYFSSESLQRNRKGTDEPMSGCAMVQNEEYLSQIYGKPIYQGHRSTLKKAPYLRFNSPSPKSKLQRPRVIEYVRGTKVKSAGTQTCSRAQKAVISSKKQHPLYALAQENQYFFSPNRDVPADCGPLEGHLIPMAVPLGQTQINDISVQPAGVVMCKPHPVTVTTSIPQVPPKPPTEVKKPNVAVIEMRSEKKDPPQLSVQVLPNVDIDSISGGSVSVNHVLPEPKPARCPADAVIQAPEDIQSEEEDVKFPGTNFTDVTDVVQDQEEERDEIPEFTEPLLEINGHFRVAEPTYNGPSFPPVASAPQQSCDVLDEWIERRETIENRLINWVEQEIMAKIISEMYPVQRETVPSVSTSEGEDSETVTSDIVEAAGGGGFQLFIDAGVPVDSEMISHLVNEVLSETIATMLGNRQAQEAVPATNLLPSTTAVMEPLVPTPLPTPQATPPQTPPSEKEMPPVQTPESSPSITELSGDVREQEKMKEAGSDIPAAVSRVGTPVITPISTPPEIITPSPPASEAAKMENPAPLNPWDDAELPLEEEKPSPLAEETFNPKAVEMSVANDEEPEALILPSWQSSPKPFQSLPCEPEAPSAAPTDSSEQSTQESSLTPTETETADRPISEGEVLFSCDQMLAAREGGLSFPNLTESLTSTLQDANEMDYDPPSEGQVVRRSHKGYHRDPVLALLAKLNQAPVAVQEGGYHLEDSDSSVGELSEGQRPRLTRAAERILMGHPVDIDHATARASEDRPYQGSRSPSPGQLTHPAEILGDADTSHGPMLVAELESQPISNPVLQAAQPSCRVASLPKGPSQEESQGDARVVRPRVVHVRRKSEEMQEEGEGVVPHFHSHVSAERMSVKLPSMNIDDQTQSLSSIHGDSDSSGADTF.

Residues 1 to 16 (MEAESGSSTSQDSLAS) show a composition bias toward polar residues. Disordered regions lie at residues 1 to 20 (MEAE…LTAG) and 57 to 84 (SRQA…ASNG). 2 coiled-coil regions span residues 428–466 (IEKT…MNDL) and 499–528 (ILSD…LRAK). Residues 498–585 (SILSDAKRVL…MEQVKYDQKV (88 aa)) form a required for centrosomal localization region. Disordered stretches follow at residues 1070-1112 (EPLV…LSGD), 1137-1262 (VITP…SEGE), 1294-1313 (ANEM…RSHK), 1373-1410 (DIDH…DADT), and 1498-1523 (SMNI…ADTF). Residues 1073-1088 (VPTPLPTPQATPPQTP) show a composition bias toward pro residues. The segment covering 1099-1108 (TPESSPSITE) has biased composition (polar residues). 2 stretches are compositionally biased toward low complexity: residues 1137–1149 (VITP…EIIT) and 1236–1251 (SSEQ…PTET). A compositionally biased stretch (basic and acidic residues) spans 1373-1386 (DIDHATARASEDRP). The span at 1507–1523 (SLSSIHGDSDSSGADTF) shows a compositional bias: low complexity.

The protein belongs to the TALPID3 family. Ubiquitously expressed.

It is found in the cytoplasm. It localises to the cytoskeleton. The protein localises to the microtubule organizing center. Its subcellular location is the centrosome. Functionally, required for ciliogenesis and sonic hedgehog/SHH signaling. Independently, involved in regulation of cell intracellular organization. Involved in regulation of cell polarity. The sequence is that of TALPID3 protein (TALPID3) from Gallus gallus (Chicken).